Here is a 101-residue protein sequence, read N- to C-terminus: DNA-binding protein Fis (101 aa).

Residues 77-96 (QTRAANMLGINRGTLRKKLK) constitute a DNA-binding region (H-T-H motif).

This sequence belongs to the transcriptional regulatory Fis family. As to quaternary structure, homodimer.

Its function is as follows. Activates ribosomal RNA transcription. Plays a direct role in upstream activation of rRNA promoters. In Shewanella pealeana (strain ATCC 700345 / ANG-SQ1), this protein is DNA-binding protein Fis.